Consider the following 102-residue polypeptide: ATP-dependent Clp protease adapter protein ClpS (102 aa).

It belongs to the ClpS family. As to quaternary structure, binds to the N-terminal domain of the chaperone ClpA.

In terms of biological role, involved in the modulation of the specificity of the ClpAP-mediated ATP-dependent protein degradation. This chain is ATP-dependent Clp protease adapter protein ClpS, found in Shewanella halifaxensis (strain HAW-EB4).